Here is a 353-residue protein sequence, read N- to C-terminus: Photosystem II D2 protein (353 aa).

N-acetylthreonine is present on T2. The residue at position 2 (T2) is a Phosphothreonine. The helical transmembrane segment at 41–61 (CAYFAVGGWFTGTTFVTSWYT) threads the bilayer. H118 provides a ligand contact to chlorophyll a. A helical transmembrane segment spans residues 125 to 141 (GFMLRQFELARSVQLRP). Residues Q130 and N143 each contribute to the pheophytin a site. The chain crosses the membrane as a helical span at residues 153-166 (VFVSVFLIYPLGQS). A chlorophyll a-binding site is contributed by H198. Residues 208–228 (AALLCAIHGATVENTLFEDGD) form a helical membrane-spanning segment. Residues H215 and F262 each coordinate a plastoquinone. A Fe cation-binding site is contributed by H215. Residue H269 coordinates Fe cation. The chain crosses the membrane as a helical span at residues 279 to 295 (GLWMSALGVVGLALNLR).

This sequence belongs to the reaction center PufL/M/PsbA/D family. As to quaternary structure, PSII is composed of 1 copy each of membrane proteins PsbA, PsbB, PsbC, PsbD, PsbE, PsbF, PsbH, PsbI, PsbJ, PsbK, PsbL, PsbM, PsbT, PsbX, PsbY, PsbZ, Psb30/Ycf12, at least 3 peripheral proteins of the oxygen-evolving complex and a large number of cofactors. It forms dimeric complexes. The D1/D2 heterodimer binds P680, chlorophylls that are the primary electron donor of PSII, and subsequent electron acceptors. It shares a non-heme iron and each subunit binds pheophytin, quinone, additional chlorophylls, carotenoids and lipids. There is also a Cl(-1) ion associated with D1 and D2, which is required for oxygen evolution. The PSII complex binds additional chlorophylls, carotenoids and specific lipids. is required as a cofactor.

It localises to the plastid. Its subcellular location is the chloroplast thylakoid membrane. The catalysed reaction is 2 a plastoquinone + 4 hnu + 2 H2O = 2 a plastoquinol + O2. Photosystem II (PSII) is a light-driven water:plastoquinone oxidoreductase that uses light energy to abstract electrons from H(2)O, generating O(2) and a proton gradient subsequently used for ATP formation. It consists of a core antenna complex that captures photons, and an electron transfer chain that converts photonic excitation into a charge separation. The D1/D2 (PsbA/PsbD) reaction center heterodimer binds P680, the primary electron donor of PSII as well as several subsequent electron acceptors. D2 is needed for assembly of a stable PSII complex. This Solanum bulbocastanum (Wild potato) protein is Photosystem II D2 protein.